Reading from the N-terminus, the 273-residue chain is Giardin subunit beta (273 aa).

The segment at 1 to 19 (MSMFTSTRTLTQTMDKPDD) is nonhelical region. The rod stretch occupies residues 20-273 (LTRSATETAV…GGLSMVTKHQ (254 aa)). 2 coiled-coil regions span residues 123 to 175 (DTLN…YDQL) and 211 to 263 (NTKL…SKIQ).

It belongs to the SF-assemblin family. In terms of assembly, interacts with BOP1 (via C-terminal WD repeats).

It is found in the cytoplasm. The protein localises to the cytoskeleton. In terms of biological role, giardins are involved in parasite attachment to the intestinal mucosa and in the cytoskeletal disassembly and reassembly that marks the transition from infectious trophozoite to transmissible cyst. They may interact with other cytoskeletal proteins such as microtubules in the microribbons or crossbridges, to maintain the integrity of the ventral disk. The chain is Giardin subunit beta from Giardia intestinalis (Giardia lamblia).